Here is a 220-residue protein sequence, read N- to C-terminus: Putative O-methyltransferase Mjls_4009 (220 aa).

S-adenosyl-L-methionine is bound by residues Val47, Glu69, 71–72, Ser77, Asp95, and Val96; that span reads GT. Residue Asp143 coordinates substrate. Residue Asp145 coordinates S-adenosyl-L-methionine.

The protein belongs to the class I-like SAM-binding methyltransferase superfamily. Cation-dependent O-methyltransferase family.

This is Putative O-methyltransferase Mjls_4009 from Mycobacterium sp. (strain JLS).